Here is a 251-residue protein sequence, read N- to C-terminus: Ubiquinone/menaquinone biosynthesis C-methyltransferase UbiE (251 aa).

S-adenosyl-L-methionine-binding positions include threonine 74, aspartate 95, and 123 to 124; that span reads NA.

Belongs to the class I-like SAM-binding methyltransferase superfamily. MenG/UbiE family.

It carries out the reaction a 2-demethylmenaquinol + S-adenosyl-L-methionine = a menaquinol + S-adenosyl-L-homocysteine + H(+). The enzyme catalyses a 2-methoxy-6-(all-trans-polyprenyl)benzene-1,4-diol + S-adenosyl-L-methionine = a 5-methoxy-2-methyl-3-(all-trans-polyprenyl)benzene-1,4-diol + S-adenosyl-L-homocysteine + H(+). The protein operates within quinol/quinone metabolism; menaquinone biosynthesis; menaquinol from 1,4-dihydroxy-2-naphthoate: step 2/2. It functions in the pathway cofactor biosynthesis; ubiquinone biosynthesis. In terms of biological role, methyltransferase required for the conversion of demethylmenaquinol (DMKH2) to menaquinol (MKH2) and the conversion of 2-polyprenyl-6-methoxy-1,4-benzoquinol (DDMQH2) to 2-polyprenyl-3-methyl-6-methoxy-1,4-benzoquinol (DMQH2). The sequence is that of Ubiquinone/menaquinone biosynthesis C-methyltransferase UbiE from Shewanella oneidensis (strain ATCC 700550 / JCM 31522 / CIP 106686 / LMG 19005 / NCIMB 14063 / MR-1).